Here is a 421-residue protein sequence, read N- to C-terminus: 3-oxoacyl-[acyl-carrier-protein] synthase 2 (421 aa).

The Ketosynthase family 3 (KS3) domain maps to 1 to 417; it reads MRRVVITGTG…GTNASLILRR (417 aa). Catalysis depends on for beta-ketoacyl synthase activity residues Cys170, His311, and His347.

It belongs to the thiolase-like superfamily. Beta-ketoacyl-ACP synthases family. As to quaternary structure, homodimer.

The enzyme catalyses a fatty acyl-[ACP] + malonyl-[ACP] + H(+) = a 3-oxoacyl-[ACP] + holo-[ACP] + CO2. It carries out the reaction (9Z)-hexadecenoyl-[ACP] + malonyl-[ACP] + H(+) = 3-oxo-(11Z)-octadecenoyl-[ACP] + holo-[ACP] + CO2. The protein operates within lipid metabolism; fatty acid biosynthesis. Its function is as follows. Involved in the type II fatty acid elongation cycle. Catalyzes the elongation of a wide range of acyl-ACP by the addition of two carbons from malonyl-ACP to an acyl acceptor. Can efficiently catalyze the conversion of palmitoleoyl-ACP (cis-hexadec-9-enoyl-ACP) to cis-vaccenoyl-ACP (cis-octadec-11-enoyl-ACP), an essential step in the thermal regulation of fatty acid composition. The polypeptide is 3-oxoacyl-[acyl-carrier-protein] synthase 2 (fabF) (Rhizobium meliloti (strain 1021) (Ensifer meliloti)).